The following is a 300-amino-acid chain: tRNA pseudouridine synthase B (300 aa).

Residue Asp38 is the Nucleophile of the active site.

It belongs to the pseudouridine synthase TruB family. Type 1 subfamily.

The catalysed reaction is uridine(55) in tRNA = pseudouridine(55) in tRNA. In terms of biological role, responsible for synthesis of pseudouridine from uracil-55 in the psi GC loop of transfer RNAs. In Anaplasma phagocytophilum (strain HZ), this protein is tRNA pseudouridine synthase B.